Here is a 347-residue protein sequence, read N- to C-terminus: Methylthioribose-1-phosphate isomerase (347 aa).

Substrate contacts are provided by residues 45-47 (RGA), arginine 88, and glutamine 197. The active-site Proton donor is aspartate 238. 248–249 (NK) lines the substrate pocket.

The protein belongs to the eIF-2B alpha/beta/delta subunits family. MtnA subfamily.

It catalyses the reaction 5-(methylsulfanyl)-alpha-D-ribose 1-phosphate = 5-(methylsulfanyl)-D-ribulose 1-phosphate. Its pathway is amino-acid biosynthesis; L-methionine biosynthesis via salvage pathway; L-methionine from S-methyl-5-thio-alpha-D-ribose 1-phosphate: step 1/6. In terms of biological role, catalyzes the interconversion of methylthioribose-1-phosphate (MTR-1-P) into methylthioribulose-1-phosphate (MTRu-1-P). In Trichormus variabilis (strain ATCC 29413 / PCC 7937) (Anabaena variabilis), this protein is Methylthioribose-1-phosphate isomerase.